Consider the following 289-residue polypeptide: Dehydrodolichyl diphosphate synthase 4 (289 aa).

Residues 2–22 (LSMLWFLLSLLSLLLLPCLRP) traverse the membrane as a helical segment.

Belongs to the UPP synthase family. It depends on Mg(2+) as a cofactor.

The protein localises to the endoplasmic reticulum membrane. The protein operates within protein modification; protein glycosylation. Its function is as follows. Catalyzes cis-prenyl chain elongation to produce the polyprenyl backbone of dolichol, a glycosyl carrier-lipid required for the biosynthesis of several classes of glycoprotein. This chain is Dehydrodolichyl diphosphate synthase 4, found in Arabidopsis thaliana (Mouse-ear cress).